A 793-amino-acid chain; its full sequence is E3 UFM1-protein ligase 1 (793 aa).

Positions 2–212 are required for E3 UFM1-protein ligase activity; sequence AADWEEIRRL…INNLLNLYGF (211 aa). Disordered regions lie at residues 405–472 and 745–793; these read ALLE…RNKL and GAEK…SVTE. Residues 427–439 are compositionally biased toward gly residues; that stretch reads EGGGSVKSGGGGN. Basic and acidic residues predominate over residues 767–781; it reads SLQRELHSLSRDIKD.

Belongs to the UFL1 family. As to quaternary structure, catalytic component of the UFM1 ribosome E3 ligase (UREL) complex. Interacts with E2-like enzyme UFC1.

Its subcellular location is the endoplasmic reticulum membrane. The protein localises to the cytoplasm. The protein resides in the cytosol. It is found in the nucleus. It localises to the chromosome. E3 protein ligase that mediates ufmylation, the covalent attachment of the ubiquitin-like modifier UFM1 to lysine residues on target proteins, and which plays a key role in various processes, such as ribosome recycling, response to DNA damage, interferon response or reticulophagy (also called ER-phagy). As part of the UREL complex, plays a key role in ribosome recycling by catalyzing mono-ufmylation of RPL26/uL24 subunit of the 60S ribosome. Ufmylation of RPL26/uL24 occurs on free 60S ribosomes following ribosome dissociation: it weakens the junction between post-termination 60S subunits and SEC61 translocons, promoting release and recycling of the large ribosomal subunit from the endoplasmic reticulum membrane. Ufmylation of RPL26/uL24 and subsequent 60S ribosome recycling either take place after normal termination of translation or after ribosome stalling during cotranslational translocation at the endoplasmic reticulum. Involved in reticulophagy in response to endoplasmic reticulum stress by mediating ufmylation of proteins such as CYB5R3 and RPN1, thereby promoting lysosomal degradation of ufmylated proteins. Ufmylation in response to endoplasmic reticulum stress is essential for processes such as hematopoiesis, blood vessel morphogenesis or inflammatory response. This chain is E3 UFM1-protein ligase 1, found in Danio rerio (Zebrafish).